The sequence spans 633 residues: MHPEASEPPVDSAAEPSLEESAGDHGDAGPGVRKEEINETKETCVGPCTTSCQSQQQPSGDNGSDGLFTHSRDDRDDRGPRMTKQFLQKLCKQHKLYVTPALNDTLYLHFKGFDRIENLEEYTGLRCLWLECNGIQRIENLQAQSELRCLFLQVNLLHKIENLEPLQKLDALNLSNNYIKTIENLSCLPVLNTLQMAHNRLETVADIEHLRECLQLCVLDLSHNSLSDPEILSVLETMPCLRVLNLMGNPVTKHIPNYRRTVTVRLKHLTYLDDRPVFPKDRACAEAWARGGYAAEKEERHQWESREHKKITDSLEALAMIKRRAEERKKARDRGETPLPESEKSIPTSPEAQEKPPKGETQQKMESFVKESFEAKDELFPEKPGEGEELSVVVGNRAVEDADLSGNLAHTQTPVVVTPEEVTSPVEATDGARTEDTEAIALETKEKLFIDDLPDLEDVDGTDVSVEDQTKDTGIRKIQAISSLSDDSDLELEELPLSVFEGTPISPTGALSHIFAVSKDPSEAARVPFADICMPTATTDLETQSQDPSTASSHPLIQELGEDELTEGESNQPLPPQSCASDPTLAQSSEGGDSQLPAATPLGDGAENEAQSSLYPEEPSTRIGLEDIEFGLD.

The tract at residues 1 to 80 (MHPEASEPPV…SRDDRDDRGP (80 aa)) is disordered. A compositionally biased stretch (basic and acidic residues) spans 22-42 (AGDHGDAGPGVRKEEINETKE). The span at 46–60 (GPCTTSCQSQQQPSG) shows a compositional bias: low complexity. The segment covering 70–80 (HSRDDRDDRGP) has biased composition (basic and acidic residues). LRR repeat units lie at residues 101–123 (ALNDTLYLHFKGFDRIENLEEYT), 124–145 (GLRCLWLECNGIQRIENLQAQS), 146–167 (ELRCLFLQVNLLHKIENLEPLQ), 168–189 (KLDALNLSNNYIKTIENLSCLP), 190–211 (VLNTLQMAHNRLETVADIEHLR), and 215–236 (QLCVLDLSHNSLSDPEILSVLE). One can recognise an LRRCT domain in the interval 249-288 (NPVTKHIPNYRRTVTVRLKHLTYLDDRPVFPKDRACAEAW). A compositionally biased stretch (basic and acidic residues) spans 326–344 (EERKKARDRGETPLPESEK). Disordered regions lie at residues 326-364 (EERKKARDRGETPLPESEKSIPTSPEAQEKPPKGETQQK) and 404-436 (LSGNLAHTQTPVVVTPEEVTSPVEATDGARTED). At S349 the chain carries Phosphoserine. Basic and acidic residues predominate over residues 352–364 (AQEKPPKGETQQK). The segment covering 413 to 427 (TPVVVTPEEVTSPVE) has biased composition (low complexity). T462 bears the Phosphothreonine mark. S465 and S488 each carry phosphoserine. 2 stretches are compositionally biased toward polar residues: residues 538–555 (TTDLETQSQDPSTASSHP) and 568–592 (GESNQPLPPQSCASDPTLAQSSEGG). The tract at residues 538 to 633 (TTDLETQSQD…GLEDIEFGLD (96 aa)) is disordered.

The protein belongs to the DNAAF1 family.

The protein resides in the cell projection. It localises to the cilium. Cilium-specific protein required for the stability of the ciliary architecture. Plays a role in cytoplasmic preassembly of dynein arms. Involved in regulation of microtubule-based cilia and actin-based brush border microvilli. The chain is Dynein axonemal assembly factor 1 (Dnaaf1) from Rattus norvegicus (Rat).